Consider the following 145-residue polypeptide: Transcriptional regulator MraZ (145 aa).

2 SpoVT-AbrB domains span residues 7–54 and 83–126; these read NATN…GPDL and GVFM…QPQA.

It belongs to the MraZ family. In terms of assembly, forms oligomers.

It is found in the cytoplasm. The protein localises to the nucleoid. This is Transcriptional regulator MraZ from Rhizobium leguminosarum bv. trifolii (strain WSM2304).